Consider the following 606-residue polypeptide: MKVRSAGSDRDVLCVTEEDLAGEDEDMPSFPCTQEGRAGPRCNRCQKNLSLHTSVRILYLFLTLLLVAVAVLASLVFRKVDSLSEDISLAQSIYNKKLVSMQENLQGLDPKALINCSFCREAEQLGQEIRKVQEELEGLQKMLLAQEVQLDQTSQTHELLSTRSSQISQEMGSCSFSIHQVNQSLGLFLAQVRGWQATTAGMDITLKDLTQECYDVKAAVHQINFTVGQTAEWIHGIQRKTDEETLTLQKIVTDWQNYTRLFGGLRTTSAKTGEIVKTIQTTLGASSQRISQNSESMHDLVLQVMGLQLQLDNISSFLDDHEENMHDLQYHTRYAQNRTVERFESLEGRMASHEIEIGTIFTNINATDNHVHSMLKYLDDVRLSCTLGFHTHAEELYYLNKSVSLMLGTTDLLRERFSLLSARLDFNVRNLSMIMEEMKAVDTHHGEILRNVTVIRGVPGPPGPRGLKGDTGVKGPVGSRGPKGDPGNLGPPGPQGPQGQPGEPGPVGERGPAGPRGFPGLKGSKGSFGTGGPRGQPGPKGDVGPLGPEGPPGSPGPSGPQGKPGISGKTGSPGQRGATGPKGEPGIQGPPGLPGPPGPPGNQSPY.

At 1-56 (MKVRSAGSDRDVLCVTEEDLAGEDEDMPSFPCTQEGRAGPRCNRCQKNLSLHTSVR) the chain is on the cytoplasmic side. Residues 57 to 77 (ILYLFLTLLLVAVAVLASLVF) form a helical; Signal-anchor for type II membrane protein membrane-spanning segment. Over 78–606 (RKVDSLSEDI…PGPPGNQSPY (529 aa)) the chain is Extracellular. N-linked (GlcNAc...) asparagine glycosylation is found at Asn115, Asn182, Asn224, Asn257, Asn313, Asn337, Asn365, Asn400, Asn430, and Asn451. Residues 455 to 606 (IRGVPGPPGP…PGPPGNQSPY (152 aa)) are disordered. Collagen-like domains are found at residues 456–558 (RGVP…PGPS) and 559–601 (GPQG…GPPG). The segment covering 497-516 (PQGQPGEPGPVGERGPAGPR) has biased composition (low complexity). Residues 526-535 (GSFGTGGPRG) are compositionally biased toward gly residues. 2 stretches are compositionally biased toward pro residues: residues 548–558 (PEGPPGSPGPS) and 591–606 (PGLP…QSPY).

The protein localises to the endoplasmic reticulum membrane. It is found in the golgi apparatus membrane. Functionally, seems to protect cells by scavenging oxidative molecules or harmful products of oxidation. In Mus musculus (Mouse), this protein is Scavenger receptor class A member 3 (Scara3).